Consider the following 424-residue polypeptide: Serine--tRNA ligase (424 aa).

Residue 229-231 (TAE) coordinates L-serine. Residues 259-261 (RKE) and Val275 each bind ATP. Residue Glu282 coordinates L-serine. An ATP-binding site is contributed by 349-352 (EVTS). Residue Thr383 participates in L-serine binding.

The protein belongs to the class-II aminoacyl-tRNA synthetase family. Type-1 seryl-tRNA synthetase subfamily. In terms of assembly, homodimer. The tRNA molecule binds across the dimer.

The protein localises to the cytoplasm. It carries out the reaction tRNA(Ser) + L-serine + ATP = L-seryl-tRNA(Ser) + AMP + diphosphate + H(+). The enzyme catalyses tRNA(Sec) + L-serine + ATP = L-seryl-tRNA(Sec) + AMP + diphosphate + H(+). The protein operates within aminoacyl-tRNA biosynthesis; selenocysteinyl-tRNA(Sec) biosynthesis; L-seryl-tRNA(Sec) from L-serine and tRNA(Sec): step 1/1. Functionally, catalyzes the attachment of serine to tRNA(Ser). Is also able to aminoacylate tRNA(Sec) with serine, to form the misacylated tRNA L-seryl-tRNA(Sec), which will be further converted into selenocysteinyl-tRNA(Sec). This is Serine--tRNA ligase from Borrelia recurrentis (strain A1).